The sequence spans 145 residues: Probable low molecular weight protein-tyrosine-phosphatase EpsP (145 aa).

Cys9 serves as the catalytic Nucleophile. Residue Arg15 is part of the active site. Asp114 functions as the Proton donor in the catalytic mechanism.

Belongs to the low molecular weight phosphotyrosine protein phosphatase family.

The enzyme catalyses O-phospho-L-tyrosyl-[protein] + H2O = L-tyrosyl-[protein] + phosphate. It participates in glycan metabolism; exopolysaccharide biosynthesis. In terms of biological role, may be involved in assembly or function of the EPS I polymerization/export complex and/or the EpsB ATPase. Alternatively it may function in the removal of the terminal phosphate from C55-isoprenyl pyrophosphate in order to recycle the C55-isoprenyl phosphate lipid carrier used in the synthesis of polysaccharide repeat units. This chain is Probable low molecular weight protein-tyrosine-phosphatase EpsP (epsP), found in Ralstonia solanacearum (Pseudomonas solanacearum).